Reading from the N-terminus, the 493-residue chain is 1-aminocyclopropane-1-carboxylate synthase CMW33 (493 aa).

Lys-279 is modified (N6-(pyridoxal phosphate)lysine).

This sequence belongs to the class-I pyridoxal-phosphate-dependent aminotransferase family. In terms of assembly, homodimer. The cofactor is pyridoxal 5'-phosphate.

It catalyses the reaction S-adenosyl-L-methionine = 1-aminocyclopropane-1-carboxylate + S-methyl-5'-thioadenosine + H(+). It functions in the pathway alkene biosynthesis; ethylene biosynthesis via S-adenosyl-L-methionine; ethylene from S-adenosyl-L-methionine: step 1/2. Catalyzes the formation of 1-aminocyclopropane-1-carboxylate, a direct precursor of ethylene in higher plants. This Cucurbita maxima (Pumpkin) protein is 1-aminocyclopropane-1-carboxylate synthase CMW33 (ACS1).